The sequence spans 217 residues: Large ribosomal subunit protein uL3 (217 aa).

Residues 134–146 (GRATHGNSRSHNV) show a composition bias toward polar residues. A disordered region spans residues 134–154 (GRATHGNSRSHNVPGSIGMAQ). Glutamine 154 carries the N5-methylglutamine modification.

It belongs to the universal ribosomal protein uL3 family. As to quaternary structure, part of the 50S ribosomal subunit. Forms a cluster with proteins L14 and L19. In terms of processing, methylated by PrmB.

Functionally, one of the primary rRNA binding proteins, it binds directly near the 3'-end of the 23S rRNA, where it nucleates assembly of the 50S subunit. The chain is Large ribosomal subunit protein uL3 from Burkholderia cenocepacia (strain HI2424).